Consider the following 843-residue polypeptide: Glycogen phosphorylase, brain form (843 aa).

An N-acetylalanine modification is found at Ala-2. Ser-15 bears the Phosphoserine; by PHK; in form phosphorylase A mark. The AMP site is built by Asp-43, Tyr-197, and Arg-310. Tyr-197 bears the Phosphotyrosine mark. Tyr-473 is modified (phosphotyrosine). Lys-569 is a binding site for pyridoxal 5'-phosphate. Residues 677-678 (TG) are pyridoxal 5'-phosphate. Lys-681 is modified (N6-(pyridoxal phosphate)lysine).

This sequence belongs to the glycogen phosphorylase family. As to quaternary structure, homodimer. Dimers associate into a tetramer to form the enzymatically active phosphorylase A. Requires pyridoxal 5'-phosphate as cofactor. In terms of processing, phosphorylation of Ser-15 converts phosphorylase B (unphosphorylated) to phosphorylase A.

It carries out the reaction [(1-&gt;4)-alpha-D-glucosyl](n) + phosphate = [(1-&gt;4)-alpha-D-glucosyl](n-1) + alpha-D-glucose 1-phosphate. With respect to regulation, activity of phosphorylase is controlled both by allosteric means (through the non-covalent binding of metabolites) and by covalent modification. Thus AMP allosterically activates, whereas ATP, ADP, and glucose-6-phosphate allosterically inhibit, phosphorylase B. Its function is as follows. Glycogen phosphorylase that regulates glycogen mobilization. Phosphorylase is an important allosteric enzyme in carbohydrate metabolism. Enzymes from different sources differ in their regulatory mechanisms and in their natural substrates. However, all known phosphorylases share catalytic and structural properties. The polypeptide is Glycogen phosphorylase, brain form (PYGB) (Bos taurus (Bovine)).